The sequence spans 239 residues: Cysteine-rich venom protein ENH1 (239 aa).

The signal sequence occupies residues 1–18; the sequence is MIVFILLSLAAVLQQFVA. Residues 37 to 165 enclose the SCP domain; sequence VDMHNSFRRS…PYNYFYVCQY (129 aa). Intrachain disulfides connect Cys74/Cys152, Cys91/Cys166, Cys147/Cys163, Cys185/Cys192, Cys188/Cys197, Cys210/Cys228, and Cys219/Cys232. Residues 201–234 enclose the ShKT domain; the sequence is CPITNTFTNCDSLLQQNSCEDSYIKTNCGASCFC.

It belongs to the CRISP family. Expressed by the venom gland.

The protein resides in the secreted. In terms of biological role, blocks contraction of smooth muscle elicited by high potassium-induced depolarization, but does not block caffeine-stimulated contraction. May target voltage-gated calcium channels on smooth muscle. This Pseudoferania polylepis (Macleay's water snake) protein is Cysteine-rich venom protein ENH1.